We begin with the raw amino-acid sequence, 322 residues long: Ribosomal RNA small subunit methyltransferase H (322 aa).

S-adenosyl-L-methionine contacts are provided by residues 40–42 (GGH), Asp-60, Phe-84, Asp-106, and Gln-113.

Belongs to the methyltransferase superfamily. RsmH family.

It is found in the cytoplasm. It catalyses the reaction cytidine(1402) in 16S rRNA + S-adenosyl-L-methionine = N(4)-methylcytidine(1402) in 16S rRNA + S-adenosyl-L-homocysteine + H(+). Functionally, specifically methylates the N4 position of cytidine in position 1402 (C1402) of 16S rRNA. This Aggregatibacter aphrophilus (strain NJ8700) (Haemophilus aphrophilus) protein is Ribosomal RNA small subunit methyltransferase H.